The following is a 314-amino-acid chain: Transcriptional activator RhrA (314 aa).

Residues 210-310 (ASIKMRVEQN…GVRPSDLRRL (101 aa)) enclose the HTH araC/xylS-type domain. 2 consecutive DNA-binding regions (H-T-H motif) follow at residues 228-249 (TDVA…SREG) and 277-300 (ISQI…RSRY).

In terms of biological role, transcriptional activator of the rhizobactin regulon. This Rhizobium meliloti (strain 1021) (Ensifer meliloti) protein is Transcriptional activator RhrA (rhrA).